Reading from the N-terminus, the 322-residue chain is AA9 family lytic polysaccharide monooxygenase A (322 aa).

The signal sequence occupies residues 1–15; sequence MKVLSLLAAASAASA. Cu(2+)-binding residues include H16 and H96. 2 disulfides stabilise this stretch: C54/C182 and C152/C237. O2-binding residues include H168 and Q177. O-linked (Man...) threonine glycosylation is found at T228 and T236. Positions 286–322 constitute a CBM1 domain; it reads CTAAQWAQCGGMGFSGCTTCASPYTCKKMNDYYSQCS.

The protein belongs to the polysaccharide monooxygenase AA9 family. Cu(2+) serves as cofactor.

Its subcellular location is the secreted. The catalysed reaction is [(1-&gt;4)-beta-D-glucosyl]n+m + reduced acceptor + O2 = 4-dehydro-beta-D-glucosyl-[(1-&gt;4)-beta-D-glucosyl]n-1 + [(1-&gt;4)-beta-D-glucosyl]m + acceptor + H2O.. In terms of biological role, lytic polysaccharide monooxygenase (LPMO) that depolymerizes crystalline and amorphous polysaccharides via the oxidation of scissile alpha- or beta-(1-4)-glycosidic bonds, yielding C4 oxidation products. Catalysis by LPMOs requires the reduction of the active-site copper from Cu(II) to Cu(I) by a reducing agent and H(2)O(2) or O(2) as a cosubstrate. Active on tamarind xyloglucan and konjac glucomannan. This Neurospora crassa (strain ATCC 24698 / 74-OR23-1A / CBS 708.71 / DSM 1257 / FGSC 987) protein is AA9 family lytic polysaccharide monooxygenase A (gh61-1).